A 384-amino-acid polypeptide reads, in one-letter code: Beta-ureidopropionase (384 aa).

Positions V72–L344 constitute a CN hydrolase domain. E119 (proton acceptor) is an active-site residue. K196 serves as the catalytic Proton donor. The active-site Nucleophile is the C233. Phosphoserine is present on S378.

The protein belongs to the carbon-nitrogen hydrolase superfamily. BUP family. In terms of assembly, homodimer, homotetramer, homooctamer; can also form higher homooligomers. As to expression, detected in liver (at protein level).

The protein resides in the cytoplasm. The enzyme catalyses 3-(carbamoylamino)propanoate + H2O + 2 H(+) = beta-alanine + NH4(+) + CO2. It catalyses the reaction 3-(carbamoylamino)-2-methylpropanoate + H2O + 2 H(+) = (R)-3-amino-2-methylpropanoate + NH4(+) + CO2. It participates in amino-acid biosynthesis; beta-alanine biosynthesis. With respect to regulation, strongly inhibited by 50 mM Zn(2+). Not inhibited by EDTA. Competitively inhibited by beta-alanine, 5-aminolevulinic acid (ALA), beta-aminoisobutyrate and 4-ureidobutyrate. Its function is as follows. Catalyzes a late step in pyrimidine degradation. Converts N-carbamoyl-beta-alanine (3-ureidopropanoate) into beta-alanine, ammonia and carbon dioxide. Likewise, converts N-carbamoyl-beta-aminoisobutyrate (3-ureidoisobutyrate) into beta-aminoisobutyrate, ammonia and carbon dioxide. The sequence is that of Beta-ureidopropionase (UPB1) from Homo sapiens (Human).